The sequence spans 710 residues: MIPLTLSSPSLNRLVLSTSRYSHSLFLSNFNSLSLIHRKLPYKPLFGARCHASSSSSSSSSFTAKSSKEIRKAQTKVVVDEKLSSIRRLFSEPGVGIDAYIIPSQDAHQSEFIAECYARRAYISGFTGSAGTAVVTKDKAALWTDGRYFLQAEKQLNSSWILMRAGNPGVPTASEWIADVLAPGGRVGIDPFLFSADAAEELKEVIAKKNHELVYLYNVNLVDEIWKDSRPKPPSRQIRIHDLKYAGLDVASKLLSLRNQIMDAGTSAIVISMLDEIAWVLNLRGSDVPHSPVMYAYLIVEVDQAQLFVDNSKVTVEVKDHLKNAGIELRPYDSILQGIDSLAARGAQLLMDPSTLNVAIISTYKSACERYSRNFESEAKVKTKFTDSSSGYTANPSGIYMQSPISWAKAIKNDAELKGMKNSHLRDAAALAHFWAWLEEEVHKNANLTEVDVADRLLEFRSMQDGFMDTSFDTISGSGANGAIIHYKPEPESCSRVDPQKLFLLDSGAQYVDGTTDITRTVHFSEPSAREKECFTRVLQGHIALDQAVFPEGTPGFVLDGFARSSLWKIGLDYRHGTGHGVGAALNVHEGPQSISFRYGNMTPLQNGMIVSNEPGYYEDHAFGIRIENLLHVRDAETPNRFGGATYLGFEKLTFFPIQTKMVDVSLLSDTEVDWLNSYHAEVWEKVSPLLEGSTTQQWLWNNTRPLAKP.

A chloroplast-targeting transit peptide spans 1–79; it reads MIPLTLSSPS…IRKAQTKVVV (79 aa). A peptide-binding residues include R147 and H486. Positions 506, 517, and 580 each coordinate Mn(2+). Residues H580, H589, and E614 each coordinate a peptide. Mn(2+)-binding residues include E614 and E628.

Belongs to the peptidase M24B family. In terms of assembly, homodimer. It depends on Mn(2+) as a cofactor.

The protein resides in the plastid. It is found in the chloroplast. It catalyses the reaction Release of any N-terminal amino acid, including proline, that is linked to proline, even from a dipeptide or tripeptide.. Functionally, catalyzes the removal of a penultimate prolyl residue from the N-termini of peptides, such as Arg-Pro-Pro. The chain is Aminopeptidase P2 from Arabidopsis thaliana (Mouse-ear cress).